Reading from the N-terminus, the 180-residue chain is ADP-ribosylation factor 5 (180 aa).

Glycine 2 is lipidated: N-myristoyl glycine. GTP-binding positions include 24–31, 67–71, and 126–129; these read GLDAAGKT, DVGGQ, and NKQD.

It belongs to the small GTPase superfamily. Arf family. Interacts (when activated) with GGA1, GGA2 and GGA3; the interaction is required for proper subcellular location of GGA1, GGA2 and GGA3. Binds ASAP2. Interacts with NCS1/FREQ at the Golgi complex. Interacts with RAB11FIP3 and RAB11FIP4.

Its subcellular location is the golgi apparatus. It is found in the cytoplasm. The protein localises to the perinuclear region. The protein resides in the membrane. It localises to the trans-Golgi network membrane. Functionally, GTP-binding protein involved in protein trafficking; may modulate vesicle budding and uncoating within the Golgi apparatus. (Microbial infection) Functions as an allosteric activator of the cholera toxin catalytic subunit, an ADP-ribosyltransferase. The polypeptide is ADP-ribosylation factor 5 (ARF5) (Homo sapiens (Human)).